Reading from the N-terminus, the 339-residue chain is Phosphate acyltransferase (339 aa).

It belongs to the PlsX family. In terms of assembly, homodimer. Probably interacts with PlsY.

The protein localises to the cytoplasm. It carries out the reaction a fatty acyl-[ACP] + phosphate = an acyl phosphate + holo-[ACP]. The protein operates within lipid metabolism; phospholipid metabolism. Its function is as follows. Catalyzes the reversible formation of acyl-phosphate (acyl-PO(4)) from acyl-[acyl-carrier-protein] (acyl-ACP). This enzyme utilizes acyl-ACP as fatty acyl donor, but not acyl-CoA. The sequence is that of Phosphate acyltransferase from Helicobacter pylori (strain J99 / ATCC 700824) (Campylobacter pylori J99).